Consider the following 561-residue polypeptide: Potassium-transporting ATPase potassium-binding subunit (561 aa).

Helical transmembrane passes span 5-25 (IELFTMIAIIVLLTKPLGTYM), 63-83 (KYALTFLLVNMVMMIITYFIL), 103-122 (LAFNTVISFMTNTNLQHYAG), 133-153 (IVIVFLMFTSAASGLVTAAAI), 179-199 (LLPISMLATLILVWQGVPQTF), 255-275 (IEMLLMMLLPTSLIYTYGLMI), 281-301 (ALVLYISLFVIFILLAVGAVY), 380-400 (AGLQNIIMYTILTVFLTGLMV), 418-438 (LIALAILVHPFLILFSSALTV), 485-505 (IMTGLVMFFGRYITIILMLAV), and 531-551 (AIFIAVVLIVGALTFFPAVIL).

It belongs to the KdpA family. In terms of assembly, the system is composed of three essential subunits: KdpA, KdpB and KdpC.

It is found in the cell membrane. Part of the high-affinity ATP-driven potassium transport (or Kdp) system, which catalyzes the hydrolysis of ATP coupled with the electrogenic transport of potassium into the cytoplasm. This subunit binds the extracellular potassium ions and delivers the ions to the membrane domain of KdpB through an intramembrane tunnel. This chain is Potassium-transporting ATPase potassium-binding subunit, found in Caldanaerobacter subterraneus subsp. tengcongensis (strain DSM 15242 / JCM 11007 / NBRC 100824 / MB4) (Thermoanaerobacter tengcongensis).